A 511-amino-acid chain; its full sequence is Maturase K (511 aa).

Belongs to the intron maturase 2 family. MatK subfamily.

The protein resides in the plastid. It localises to the chloroplast. Functionally, usually encoded in the trnK tRNA gene intron. Probably assists in splicing its own and other chloroplast group II introns. This is Maturase K from Hordeum bulbosum (Bulbous barley).